The following is a 254-amino-acid chain: MFNILSRVCRSSSFHGFLRSSGYPRFGASFRGISMLNDLNNSANYQSKKRVGRGPASGLGKTSGRGHKGSGQRRGRRIKPGFEGGQTPITKLFPKVGHSTGHLKKPLRLGLGRVQEWIDRGRLDASKTITMKDLLDSRCCRGIKHGVELTADEPGLLKTAISIEVSKATVQAIQQIKNAGGSITTVYFSPLALRAHLHPSSFRTPPRPPLPVSKKDIRYYTNPHFAGYLANVKNIRELYYGDQRFPYEPIVKDK.

Residues 1-78 (MFNILSRVCR…GSGQRRGRRI (78 aa)) constitute a mitochondrion transit peptide. The disordered stretch occupies residues 44-104 (NYQSKKRVGR…KVGHSTGHLK (61 aa)). Over residues 64–79 (GRGHKGSGQRRGRRIK) the composition is skewed to basic residues.

It belongs to the universal ribosomal protein uL15 family. Component of the mitochondrial large ribosomal subunit (mt-LSU). Mature yeast 74S mitochondrial ribosomes consist of a small (37S) and a large (54S) subunit. The 37S small subunit contains a 15S ribosomal RNA (15S mt-rRNA) and at least 32 different proteins. The 54S large subunit contains a 21S rRNA (21S mt-rRNA) and at least 45 different proteins.

The protein resides in the mitochondrion. Functionally, component of the mitochondrial ribosome (mitoribosome), a dedicated translation machinery responsible for the synthesis of mitochondrial genome-encoded proteins, including at least some of the essential transmembrane subunits of the mitochondrial respiratory chain. The mitoribosomes are attached to the mitochondrial inner membrane and translation products are cotranslationally integrated into the membrane. The sequence is that of Large ribosomal subunit protein uL15m (mrpl10) from Schizosaccharomyces pombe (strain 972 / ATCC 24843) (Fission yeast).